Consider the following 358-residue polypeptide: UDP-N-acetylglucosamine--N-acetylmuramyl-(pentapeptide) pyrophosphoryl-undecaprenol N-acetylglucosamine transferase (358 aa).

UDP-N-acetyl-alpha-D-glucosamine is bound by residues 12-14 (TGG), asparagine 124, arginine 162, serine 185, isoleucine 242, 261-266 (ALTVSE), and glutamine 287.

Belongs to the glycosyltransferase 28 family. MurG subfamily.

The protein resides in the cell inner membrane. The catalysed reaction is di-trans,octa-cis-undecaprenyl diphospho-N-acetyl-alpha-D-muramoyl-L-alanyl-D-glutamyl-meso-2,6-diaminopimeloyl-D-alanyl-D-alanine + UDP-N-acetyl-alpha-D-glucosamine = di-trans,octa-cis-undecaprenyl diphospho-[N-acetyl-alpha-D-glucosaminyl-(1-&gt;4)]-N-acetyl-alpha-D-muramoyl-L-alanyl-D-glutamyl-meso-2,6-diaminopimeloyl-D-alanyl-D-alanine + UDP + H(+). Its pathway is cell wall biogenesis; peptidoglycan biosynthesis. Cell wall formation. Catalyzes the transfer of a GlcNAc subunit on undecaprenyl-pyrophosphoryl-MurNAc-pentapeptide (lipid intermediate I) to form undecaprenyl-pyrophosphoryl-MurNAc-(pentapeptide)GlcNAc (lipid intermediate II). This chain is UDP-N-acetylglucosamine--N-acetylmuramyl-(pentapeptide) pyrophosphoryl-undecaprenol N-acetylglucosamine transferase, found in Pseudoalteromonas translucida (strain TAC 125).